The sequence spans 225 residues: UPF0173 metal-dependent hydrolase PAE2160 (225 aa).

Belongs to the UPF0173 family.

In Pyrobaculum aerophilum (strain ATCC 51768 / DSM 7523 / JCM 9630 / CIP 104966 / NBRC 100827 / IM2), this protein is UPF0173 metal-dependent hydrolase PAE2160.